The sequence spans 391 residues: 4-hydroxy-3-methylbut-2-en-1-yl diphosphate synthase (flavodoxin) (391 aa).

[4Fe-4S] cluster-binding residues include cysteine 282, cysteine 285, cysteine 317, and glutamate 324.

It belongs to the IspG family. Requires [4Fe-4S] cluster as cofactor.

The enzyme catalyses (2E)-4-hydroxy-3-methylbut-2-enyl diphosphate + oxidized [flavodoxin] + H2O + 2 H(+) = 2-C-methyl-D-erythritol 2,4-cyclic diphosphate + reduced [flavodoxin]. The protein operates within isoprenoid biosynthesis; isopentenyl diphosphate biosynthesis via DXP pathway; isopentenyl diphosphate from 1-deoxy-D-xylulose 5-phosphate: step 5/6. In terms of biological role, converts 2C-methyl-D-erythritol 2,4-cyclodiphosphate (ME-2,4cPP) into 1-hydroxy-2-methyl-2-(E)-butenyl 4-diphosphate. The polypeptide is 4-hydroxy-3-methylbut-2-en-1-yl diphosphate synthase (flavodoxin) (Acidothermus cellulolyticus (strain ATCC 43068 / DSM 8971 / 11B)).